The primary structure comprises 173 residues: Endoribonuclease YbeY (173 aa).

Positions 120, 124, and 130 each coordinate Zn(2+).

Belongs to the endoribonuclease YbeY family. Requires Zn(2+) as cofactor.

Its subcellular location is the cytoplasm. Functionally, single strand-specific metallo-endoribonuclease involved in late-stage 70S ribosome quality control and in maturation of the 3' terminus of the 16S rRNA. In Kineococcus radiotolerans (strain ATCC BAA-149 / DSM 14245 / SRS30216), this protein is Endoribonuclease YbeY.